Reading from the N-terminus, the 423-residue chain is Enolase (423 aa).

Q163 serves as a coordination point for (2R)-2-phosphoglycerate. The Proton donor role is filled by E205. Positions 242, 285, and 312 each coordinate Mg(2+). Positions 337, 366, 367, and 388 each coordinate (2R)-2-phosphoglycerate. Catalysis depends on K337, which acts as the Proton acceptor.

This sequence belongs to the enolase family. Requires Mg(2+) as cofactor.

The protein localises to the cytoplasm. It localises to the secreted. It is found in the cell surface. It catalyses the reaction (2R)-2-phosphoglycerate = phosphoenolpyruvate + H2O. The protein operates within carbohydrate degradation; glycolysis; pyruvate from D-glyceraldehyde 3-phosphate: step 4/5. Functionally, catalyzes the reversible conversion of 2-phosphoglycerate (2-PG) into phosphoenolpyruvate (PEP). It is essential for the degradation of carbohydrates via glycolysis. This Desulforapulum autotrophicum (strain ATCC 43914 / DSM 3382 / VKM B-1955 / HRM2) (Desulfobacterium autotrophicum) protein is Enolase.